A 1196-amino-acid polypeptide reads, in one-letter code: DNA-directed RNA polymerase subunit beta (1196 aa).

It belongs to the RNA polymerase beta chain family. The RNAP catalytic core consists of 2 alpha, 1 beta, 1 beta' and 1 omega subunit. When a sigma factor is associated with the core the holoenzyme is formed, which can initiate transcription.

The enzyme catalyses RNA(n) + a ribonucleoside 5'-triphosphate = RNA(n+1) + diphosphate. Its function is as follows. DNA-dependent RNA polymerase catalyzes the transcription of DNA into RNA using the four ribonucleoside triphosphates as substrates. In Lactococcus lactis subsp. lactis (strain IL1403) (Streptococcus lactis), this protein is DNA-directed RNA polymerase subunit beta.